Reading from the N-terminus, the 391-residue chain is Pyruvate dehydrogenase E1 component subunit alpha, testis-specific form, mitochondrial (391 aa).

A mitochondrion-targeting transit peptide spans 1-30; that stretch reads MRKMLATVLSQVFSGMVQKPALRGLLSSLK. Histidine 93, tyrosine 119, arginine 120, alanine 158, glycine 166, valine 168, aspartate 197, glycine 198, alanine 199, asparagine 226, and tyrosine 228 together coordinate pyruvate. Residues tyrosine 119 and arginine 120 each coordinate thiamine diphosphate. Thiamine diphosphate is bound by residues glycine 166, valine 168, aspartate 197, glycine 198, alanine 199, and asparagine 226. Aspartate 197 contributes to the Mg(2+) binding site. Residues asparagine 226 and tyrosine 228 each contribute to the Mg(2+) site. Histidine 293 provides a ligand contact to thiamine diphosphate. Residues serine 294 and serine 296 each carry the phosphoserine modification. A Phosphoserine; by PDK3 modification is found at serine 301.

Heterotetramer of two PDHA2 and two PDHB subunits. The heterotetramer interacts with DLAT, and is part of the multimeric pyruvate dehydrogenase complex that contains multiple copies of pyruvate dehydrogenase (E1), dihydrolipoamide acetyltransferase (DLAT, E2) and lipoamide dehydrogenase (DLD, E3). These subunits are bound to an inner core composed of about 48 DLAT and 12 PDHX molecules. Thiamine diphosphate serves as cofactor. Mg(2+) is required as a cofactor. As to expression, testis.

It localises to the mitochondrion matrix. The catalysed reaction is N(6)-[(R)-lipoyl]-L-lysyl-[protein] + pyruvate + H(+) = N(6)-[(R)-S(8)-acetyldihydrolipoyl]-L-lysyl-[protein] + CO2. With respect to regulation, pyruvate dehydrogenase activity is inhibited by phosphorylation of PDHA2; it is reactivated by dephosphorylation. In terms of biological role, the pyruvate dehydrogenase complex catalyzes the overall conversion of pyruvate to acetyl-CoA and CO(2), and thereby links the glycolytic pathway to the tricarboxylic cycle. In Rattus norvegicus (Rat), this protein is Pyruvate dehydrogenase E1 component subunit alpha, testis-specific form, mitochondrial (Pdha2).